Here is a 756-residue protein sequence, read N- to C-terminus: Inactive carboxypeptidase-like protein X2 (756 aa).

The first 25 residues, 1 to 25, serve as a signal peptide directing secretion; it reads MSRPGTATPALALVLLAVTLAGVGA. Residues 51–131 are disordered; the sequence is EPELETFSPP…DHSVRVARED (81 aa). Positions 68–78 are enriched in basic and acidic residues; that stretch reads EWERRPQEPRP. Over residues 79 to 90 the composition is skewed to basic residues; the sequence is PKRATKPKKAPK. Basic and acidic residues predominate over residues 113–131; it reads KSSEKAANDDHSVRVARED. The 160-residue stretch at 134–293 folds into the F5/8 type C domain; it reads ESCPPLGLET…ICMRMEILGC (160 aa). A disulfide bridge connects residues cysteine 136 and cysteine 293. N-linked (GlcNAc...) asparagine glycosylation is found at asparagine 231, asparagine 241, asparagine 281, asparagine 337, and asparagine 491. In terms of domain architecture, Peptidase M14 spans 317-640; that stretch reads KHHNYKEMRQ…ESLIVFMEQV (324 aa).

It belongs to the peptidase M14 family.

It localises to the secreted. May be involved in cell-cell interactions. The polypeptide is Inactive carboxypeptidase-like protein X2 (CPXM2) (Homo sapiens (Human)).